The sequence spans 960 residues: Chromosome transmission fidelity protein 18 (960 aa).

Disordered regions lie at residues 56 to 79 (DLFH…STLD) and 91 to 113 (DISE…YPNT). The span at 58–69 (FHSSQPVGSPTR) shows a compositional bias: polar residues. 423–430 (GLAGAGKT) provides a ligand contact to ATP.

It belongs to the activator 1 small subunits family. CTF18 subfamily. Component of the ctf18-RFC complex which consists of ctf18, ctf8, dcc1, rfc2, rfc3, rfc4 and rfc5.

It is found in the nucleus. In terms of biological role, essential for the fidelity of chromosome transmission. Required for the DNA replication block checkpoint. Replication factor C (RFC) complex has an essential but redundant activity in sister chromatid cohesion establishment. Acts as a PCNA loader, loading PCNA onto primed templates. An RFC-like complex (ctf18-RFC) is formed where ctf18 replaces rfc1 in the RFC complex along with the association of dcc1 and ctf8. This complex is required for efficient establishment of chromosome cohesion during S-phase. The chain is Chromosome transmission fidelity protein 18 (ctf18) from Schizosaccharomyces pombe (strain 972 / ATCC 24843) (Fission yeast).